We begin with the raw amino-acid sequence, 374 residues long: MPTKLPLELEDEILLRVPPLSLTRFRTVCKRWNTLFNDQRFINNHLACVRPQFILRTEKDSKIYSIGINIDDSLEVRELNLETQGPNKKLKVYRNLFYCDGFLLCPALLDEVAVWNPWLRKQTKWIEPKRSRFNLYGLGYDNRRPEKCYKILGFGYGYSSEINGSYNRINPRVSVFEFETNAWKDLKFGLFDWHLRSPRTVLSLNGTLYWIAVRCESGGDGFIQSFDFSREMFEPFCLLPCKNDFGDTQILEVFRGDRLSVLEQCPTTNKIKIWVTKNKISGDRKELVSWRLLMTVSIPNFPRLQDLYSNSQPSYFMDNNDDKRLIVCTCDESGKPCIYIVKGDRFKKIQMGFEVEPWPFHLVYVPSLVPIPLA.

In terms of domain architecture, F-box spans 1–45 (MPTKLPLELEDEILLRVPPLSLTRFRTVCKRWNTLFNDQRFINNH).

The chain is Putative F-box protein At3g16590 from Arabidopsis thaliana (Mouse-ear cress).